Reading from the N-terminus, the 330-residue chain is GMP reductase (330 aa).

The active-site Thioimidate intermediate is the cysteine 180. Position 209-232 (209-232) interacts with NADP(+); sequence LIADGGIRHNGDIAKSVRFGASMV.

It belongs to the IMPDH/GMPR family. GuaC type 2 subfamily.

The catalysed reaction is IMP + NH4(+) + NADP(+) = GMP + NADPH + 2 H(+). Its function is as follows. Catalyzes the irreversible NADPH-dependent deamination of GMP to IMP. It functions in the conversion of nucleobase, nucleoside and nucleotide derivatives of G to A nucleotides, and in maintaining the intracellular balance of A and G nucleotides. The polypeptide is GMP reductase (Lactobacillus delbrueckii subsp. bulgaricus (strain ATCC BAA-365 / Lb-18)).